Consider the following 311-residue polypeptide: Chalcone synthase 4 (311 aa).

Residue Cys164 is part of the active site.

This sequence belongs to the thiolase-like superfamily. Chalcone/stilbene synthases family.

The catalysed reaction is (E)-4-coumaroyl-CoA + 3 malonyl-CoA + 3 H(+) = 2',4,4',6'-tetrahydroxychalcone + 3 CO2 + 4 CoA. Its pathway is secondary metabolite biosynthesis; flavonoid biosynthesis. Its function is as follows. The primary product of this enzyme is 4,2',4',6'-tetrahydroxychalcone (also termed naringenin-chalcone or chalcone) which can under specific conditions spontaneously isomerize into naringenin. The sequence is that of Chalcone synthase 4 (CHS4) from Trifolium subterraneum (Subterranean clover).